The sequence spans 512 residues: MEELKGYLEKSQSKQQHFLYPLLFLEYIYALAHDHGLNVNGSIFYEPAEMSGYDNKFSSLLVKRLITRMYQQNFLINSVNDSNQNRFVGHNKNFYSQMISEGFAVIVEIPFSLRLVSSLEEKKEIPKSQNLRSIHSIFPFFEDKLSHLNYVSDILIPYPVHLKILVQILQCWIQDVPSLHLLRFFFHEYHNWNNIITPKKSSYGFSKENPRLFRFLYNSYVVECESILVFLRKQSSYLRSTSSGTFLERTHFYEKIEQQHLVVLCYNDFQKILWLFKDPFMHYVRYQGKSILASKGTHFLMKKWKSYFVNFWQCHFHFWSQPRRIHINQFSKFSFYFLGYLSNVPINPSAVKSQMLENSFLIDTVTKKFETIVPIVPMIGSLSKAKFCNVLGNPISKPVWADLLDSDIIDRFGRICRNLSHYYSGSSKKQSLYRIKYILRLSCARTLARKHKSTVRAFMQRLGSEFLEEFFTEEEKVISLALPRISYPLHKLYRERIWYXDIIRINDLVNHL.

Belongs to the intron maturase 2 family. MatK subfamily.

The protein resides in the plastid. The protein localises to the chloroplast. In terms of biological role, usually encoded in the trnK tRNA gene intron. Probably assists in splicing its own and other chloroplast group II introns. The protein is Maturase K of Zantedeschia aethiopica (White calla lily).